A 153-amino-acid polypeptide reads, in one-letter code: Small ribosomal subunit protein uS13 (153 aa).

It belongs to the universal ribosomal protein uS13 family.

The protein resides in the cytoplasm. In terms of biological role, located at the top of the head of the 40S subunit, it contacts several helices of the 18S rRNA. This Chlamydomonas reinhardtii (Chlamydomonas smithii) protein is Small ribosomal subunit protein uS13 (RPS18).